We begin with the raw amino-acid sequence, 208 residues long: MKLQVLDIKGNEIKEIALNDYVWGIEPHQQAIYDTVISQQAALRQGTKKVKTRAEVSGGGRKPWKQKGTGRARQGSIRAPQWKGGGVTFGPTPDINYKKSVNKKVRALAFRSVLSLKVKENNLVIVDKFEFAKPSTKEMVVVMKNLKIDDQKTLIVTKEKEELVVKSSNNITGVKTISANQLNVFDLLNATKLLITEEAAIAVEEVYA.

Residues 50 to 83 (VKTRAEVSGGGRKPWKQKGTGRARQGSIRAPQWK) form a disordered region.

It belongs to the universal ribosomal protein uL4 family. In terms of assembly, part of the 50S ribosomal subunit.

One of the primary rRNA binding proteins, this protein initially binds near the 5'-end of the 23S rRNA. It is important during the early stages of 50S assembly. It makes multiple contacts with different domains of the 23S rRNA in the assembled 50S subunit and ribosome. In terms of biological role, forms part of the polypeptide exit tunnel. This Mycoplasma mycoides subsp. mycoides SC (strain CCUG 32753 / NCTC 10114 / PG1) protein is Large ribosomal subunit protein uL4.